Consider the following 492-residue polypeptide: Catalase isozyme A (492 aa).

Residues 1 to 23 (MDPCKFRPSSSFDTKTTTTNAGA) are disordered. Positions 8–21 (PSSSFDTKTTTTNA) are enriched in polar residues. Catalysis depends on residues His65 and Asn138. Tyr348 serves as a coordination point for heme.

Belongs to the catalase family. Homotetramer. It depends on heme as a cofactor.

Its subcellular location is the peroxisome. It localises to the glyoxysome. The catalysed reaction is 2 H2O2 = O2 + 2 H2O. Its function is as follows. Occurs in almost all aerobically respiring organisms and serves to protect cells from the toxic effects of hydrogen peroxide. This is Catalase isozyme A from Oryza sativa subsp. indica (Rice).